We begin with the raw amino-acid sequence, 325 residues long: Myo-inositol dehydrogenase Hyg17 (325 aa).

Belongs to the Gfo/Idh/MocA family.

The catalysed reaction is myo-inositol + NAD(+) = myo-inosose-5 + NADH + H(+). It participates in antibiotic biosynthesis. In terms of biological role, dehydrogenase involved in the biosynthesis of the aminocyclitol moiety of hygromycin A, a broad-spectrum antibiotic. Catalyzes the NAD(+)-dependent oxidation of myo-inositol to myo-inosose-5 (neo-inosose). Shows reduced activity with scyllo-inositol, minimal activity with L-chiro-inositol and no activity with D-glucose, D-chiro-inositol, epi-inositol, muco-inositol and allo-inositol. Is specific for NAD(+) and cannot use NADP(+). This chain is Myo-inositol dehydrogenase Hyg17, found in Streptomyces leeuwenhoekii.